The primary structure comprises 182 residues: UPF0397 protein SPT_0523 (182 aa).

The next 5 helical transmembrane spans lie at 10 to 30 (VVAVGIGAALFVVIGMINIPT), 46 to 66 (LLSIIFGPIIGLLVGLIGHAI), 73 to 93 (YGLWWTWIIASGLFGLVVGLF), 109 to 129 (ILIFNLIQLLANALVWGVLAP), and 148 to 168 (IVAGIANGVSVAIAGTLLLLA).

It belongs to the UPF0397 family.

Its subcellular location is the cell membrane. The sequence is that of UPF0397 protein SPT_0523 from Streptococcus pneumoniae (strain Taiwan19F-14).